A 289-amino-acid chain; its full sequence is Elongation factor Ts (289 aa).

An involved in Mg(2+) ion dislocation from EF-Tu region spans residues 82-85; the sequence is TDFV.

It belongs to the EF-Ts family.

It localises to the cytoplasm. In terms of biological role, associates with the EF-Tu.GDP complex and induces the exchange of GDP to GTP. It remains bound to the aminoacyl-tRNA.EF-Tu.GTP complex up to the GTP hydrolysis stage on the ribosome. This Marinobacter nauticus (strain ATCC 700491 / DSM 11845 / VT8) (Marinobacter aquaeolei) protein is Elongation factor Ts.